Here is a 200-residue protein sequence, read N- to C-terminus: Lipopolysaccharide core heptose(II)-phosphate phosphatase (200 aa).

A signal peptide spans 1-25 (MLAFCRSSLKSKKYFIILLALAAIA).

This sequence belongs to the phosphoglycerate mutase family. Ais subfamily.

Its subcellular location is the periplasm. The protein operates within bacterial outer membrane biogenesis; lipopolysaccharide metabolism. Its function is as follows. Catalyzes the dephosphorylation of heptose(II) of the outer membrane lipopolysaccharide core. In Escherichia coli (strain SE11), this protein is Lipopolysaccharide core heptose(II)-phosphate phosphatase.